We begin with the raw amino-acid sequence, 167 residues long: Dual specificity protein phosphatase 1B (167 aa).

Positions 24–165 (DLSEIQQGLF…LQQFEKSIQG (142 aa)) constitute a Tyrosine-protein phosphatase domain. Cys-109 serves as the catalytic Phosphocysteine intermediate.

This sequence belongs to the protein-tyrosine phosphatase family. Non-receptor class dual specificity subfamily. Associates with MPK3 and MPK6. Interacts with MPK6 is promoted during HR-like responses triggered by fungal elicitors, whereas interaction with MPK3 in repressed. In terms of tissue distribution, expressed in flowers, seedlings, roots, leaves, and seeds. Present in stomata and meristematic cells.

Its subcellular location is the nucleus. The protein localises to the cytoplasm. The enzyme catalyses O-phospho-L-tyrosyl-[protein] + H2O = L-tyrosyl-[protein] + phosphate. The catalysed reaction is O-phospho-L-seryl-[protein] + H2O = L-seryl-[protein] + phosphate. It carries out the reaction O-phospho-L-threonyl-[protein] + H2O = L-threonyl-[protein] + phosphate. Has a dual specificity toward Ser/Thr and Tyr-containing proteins. Prevents biotic and abiotic stress responses, including ozone, oxidative stress and pathogen attacks; represses MAPK activities during hypersensitive response to limit the spread of the HR response after infection by necrotrophic pathogen such as Botrytis cinerea. May be also involved in ABA and salt responses. Dephosphorylates MPK3 and MPK6. This chain is Dual specificity protein phosphatase 1B (DSPTP1B), found in Arabidopsis thaliana (Mouse-ear cress).